Consider the following 261-residue polypeptide: Endomucin (261 aa).

A signal peptide spans 1-18 (MELLQVTILFLLPSICSS). Asn-19, Asn-28, Asn-98, and Asn-104 each carry an N-linked (GlcNAc...) asparagine glycan. Over 19–190 (NSTGVLEAAN…TSATSRSYSS (172 aa)) the chain is Extracellular. Polar residues-rich tracts occupy residues 118-134 (TLQSSKPKTETQSSIKT) and 146-171 (ASPSKTGTLTSIPVTIPENTSQSQVI). Positions 118 to 183 (TLQSSKPKTE…EGGKNASTSA (66 aa)) are disordered. Asn-164 and Asn-178 each carry an N-linked (GlcNAc...) asparagine glycan. Residues 191–211 (IILPVVIALIVITLSVFVLVG) traverse the membrane as a helical segment. Topologically, residues 212–261 (LYRMCWKADPGTPENGNDQPQSDKESVKLLTVKTISHESGEHSAQGKTKN) are cytoplasmic. Ser-237 is subject to Phosphoserine.

Post-translationally, highly O-glycosylated. Sialic acid-rich glycoprotein. As to expression, expressed in heart, kidney and lung.

Its subcellular location is the cell membrane. It localises to the membrane. It is found in the secreted. Functionally, endothelial sialomucin, also called endomucin or mucin-like sialoglycoprotein, which interferes with the assembly of focal adhesion complexes and inhibits interaction between cells and the extracellular matrix. The sequence is that of Endomucin (EMCN) from Homo sapiens (Human).